The sequence spans 561 residues: Corneodesmosin (561 aa).

The signal sequence occupies residues 1 to 32; that stretch reads MGSSRAPRMGSVGGHGLMALLMAGLILPGILA. Disordered regions lie at residues 41 to 275, 415 to 466, and 536 to 561; these read PCKD…HTVS, GSVS…SSSL, and PLGP…LEKS. A compositionally biased stretch (low complexity) spans 61–99; it reads GSNSISSQGGSSSFSSQGGSSSFSSHGGSSSSQGSSSGS. Over residues 116-127 the composition is skewed to gly residues; it reads GSGGSRPGGSGS. 2 stretches are compositionally biased toward low complexity: residues 128–207 and 224–248; these read QSGS…SSGS and TSGM…PCSS. Polar residues predominate over residues 415–430; sequence GSVSSKGPCSGTRIQI. A compositionally biased stretch (low complexity) spans 431 to 466; it reads TSSSSSTSYHPCSGGPSQGPCSSPGTGSISGGSSSL.

It localises to the secreted. Important for the epidermal barrier integrity. This is Corneodesmosin (Cdsn) from Mus musculus (Mouse).